The primary structure comprises 103 residues: Co-chaperonin GroES (103 aa).

This sequence belongs to the GroES chaperonin family. As to quaternary structure, heptamer of 7 subunits arranged in a ring. Interacts with the chaperonin GroEL.

Its subcellular location is the cytoplasm. In terms of biological role, together with the chaperonin GroEL, plays an essential role in assisting protein folding. The GroEL-GroES system forms a nano-cage that allows encapsulation of the non-native substrate proteins and provides a physical environment optimized to promote and accelerate protein folding. GroES binds to the apical surface of the GroEL ring, thereby capping the opening of the GroEL channel. The polypeptide is Co-chaperonin GroES (Synechococcus sp. (strain JA-2-3B'a(2-13)) (Cyanobacteria bacterium Yellowstone B-Prime)).